A 223-amino-acid chain; its full sequence is Icarapin (223 aa).

Positions 1–19 (MKTLGVLFIAAWFIACTHS) are cleaved as a signal peptide. N-linked (GlcNAc...) asparagine glycosylation is found at asparagine 126, asparagine 142, asparagine 168, and asparagine 193. Over residues 186 to 203 (LPTLIGKNETSTQSSRSV) the composition is skewed to polar residues. The tract at residues 186-223 (LPTLIGKNETSTQSSRSVESVEDFDNEIPKNQGDVLTA) is disordered.

In terms of tissue distribution, expressed by the venom duct.

Its subcellular location is the secreted. This Apis mellifera carnica (Carniolan honeybee) protein is Icarapin.